Consider the following 394-residue polypeptide: MKFLAAASLLVASTLAVPTSSGGSCRPRPPPGGGNGGNGGNGGNGGNGYQPCPAGLYSNPQCCATDVLGVADLDCKNPSSAPMSGDNFKSICNAVGQQAKCCVLPVAGQAVLCQDSINGGGNGGNNGGNGGNNGGNGGNNGGNTDYPGGNGGNNGGNNGGNNGGNNGGNNGGNNGGNNGGNNGGNNGGNNGGNGGNGGNGYQACPAGLLYSNPQCCSTGVLGVADLDCKNPSSAPTSGDDFQKICANGGQQAQCCSIPVAGQAVLCQPAIGGGNPGGNGGNNGGNGGNGGNNGGNNGGNGDYPGGNGGNNGGSNGGGNGGNGGNGGSFKCPSGLYSVPQCCATDVLGVADLDCGNPSRQPTDSSDFASVCAAKGQRARCCVLPLLGQAVLCTGA.

The N-terminal stretch at 1 to 16 (MKFLAAASLLVASTLA) is a signal peptide. A disordered region spans residues 17–42 (VPTSSGGSCRPRPPPGGGNGGNGGNG). A compositionally biased stretch (gly residues) spans 33–42 (GGNGGNGGNG). The hydrophobin 1 stretch occupies residues 48–117 (GYQPCPAGLY…GQAVLCQDSI (70 aa)). Intrachain disulfides connect Cys-52-Cys-101, Cys-62-Cys-92, Cys-63-Cys-75, and Cys-102-Cys-113. The tract at residues 135–157 (GNGGNNGGNTDYPGGNGGNNGGN) is disordered. Gly residues predominate over residues 148-157 (GGNGGNNGGN). 2 hydrophobin regions span residues 200–270 (GYQA…QPAI) and 326–394 (GSFK…CTGA).

The protein belongs to the cerato-ulmin hydrophobin family. In terms of assembly, homotetramer. Further self-assembles to form highly ordered films at water-air interfaces through intermolecular interactions. In terms of processing, several N-termini starting at positions 17, 20, 22, 28 and 48 have been identified by direct sequencing. Post-translationally, contains a number of intrachain disulfide bonds. Not glycosylated.

It is found in the secreted. It localises to the cell wall. Its function is as follows. Aerial growth, conidiation, and dispersal of filamentous fungi in the environment rely upon a capability of their secreting small amphipathic proteins called hydrophobins (HPBs) with low sequence identity. Class I can self-assemble into an outermost layer of rodlet bundles on aerial cell surfaces, conferring cellular hydrophobicity that supports fungal growth, development and dispersal; whereas Class II form highly ordered films at water-air interfaces through intermolecular interactions but contribute nothing to the rodlet structure. TH1 is a class II hydrophobin that reduces water surface tension dramatically upon assembly at the water-air interface and plays a role in the formation of aerial hyphae. This chain is Class II hydrophobin TH1 (TH1), found in Claviceps fusiformis (Ergot fungus).